Reading from the N-terminus, the 275-residue chain is Phenylalanine-4-hydroxylase (275 aa).

H135, H140, and E181 together coordinate Fe cation.

This sequence belongs to the biopterin-dependent aromatic amino acid hydroxylase family. The cofactor is Fe(2+).

The catalysed reaction is (6R)-L-erythro-5,6,7,8-tetrahydrobiopterin + L-phenylalanine + O2 = (4aS,6R)-4a-hydroxy-L-erythro-5,6,7,8-tetrahydrobiopterin + L-tyrosine. Its pathway is amino-acid degradation; L-phenylalanine degradation; acetoacetate and fumarate from L-phenylalanine: step 1/6. The chain is Phenylalanine-4-hydroxylase (phhA) from Mesorhizobium japonicum (strain LMG 29417 / CECT 9101 / MAFF 303099) (Mesorhizobium loti (strain MAFF 303099)).